The primary structure comprises 636 residues: Iron transport multicopper oxidase FET3 (636 aa).

A signal peptide spans 1–21; the sequence is MTNALLSIAVLLFSMLSLAQA. The Extracellular portion of the chain corresponds to 22 to 559; that stretch reads ETHTFNWTTG…AFIPTGFTKK (538 aa). N-linked (GlcNAc...) asparagine glycans are attached at residues asparagine 27, asparagine 74, and asparagine 77. Plastocyanin-like domains follow at residues 32 to 146 and 157 to 301; these read WDYR…IKDD and SLSL…VYNK. Positions 81 and 83 each coordinate Cu cation. Asparagine 88 and asparagine 113 each carry an N-linked (GlcNAc...) asparagine glycan. Cu cation is bound by residues histidine 126 and histidine 128. Asparagine 194, asparagine 198, asparagine 244, asparagine 265, asparagine 292, asparagine 300, asparagine 359, and asparagine 381 each carry an N-linked (GlcNAc...) asparagine glycan. A Plastocyanin-like 3 domain is found at 362–502; sequence YTAPKVPTLM…GLGLVLVEDP (141 aa). The Cu cation site is built by histidine 413, histidine 416, histidine 418, histidine 483, cysteine 484, histidine 485, and histidine 489. The helical transmembrane segment at 560 to 584 threads the bilayer; sequence GIIAMTFSCFAGILGIITIAIYGMM. Topologically, residues 585–636 are cytoplasmic; that stretch reads DMEDATEKVIRDLHVDPEVLLNEVDENEERQVNEDRHSTEKHQFLTKAKRFF.

This sequence belongs to the multicopper oxidase family. The cofactor is Cu cation.

It localises to the cell membrane. The enzyme catalyses 4 Fe(2+) + O2 + 4 H(+) = 4 Fe(3+) + 2 H2O. The catalysed reaction is 4 Cu(+) + O2 + 4 H(+) = 4 Cu(2+) + 2 H2O. Its function is as follows. Iron transport multicopper ferroxidase required for Fe(2+) ion high affinity uptake. Required to oxidize Fe(2+) to Fe(3+), which is then transported into the cell via the ferric iron permease FTR1. Essential component of copper-dependent iron transport. Also has cuprous oxidase activity. This Saccharomyces cerevisiae (strain ATCC 204508 / S288c) (Baker's yeast) protein is Iron transport multicopper oxidase FET3 (FET3).